The chain runs to 373 residues: tRNA-specific 2-thiouridylase MnmA (373 aa).

ATP-binding positions include 12–19 (GMSGGVDS) and methionine 38. Positions 98 to 100 (NPD) are interaction with target base in tRNA. Cysteine 103 serves as the catalytic Nucleophile. Residues cysteine 103 and cysteine 200 are joined by a disulfide bond. Glycine 127 provides a ligand contact to ATP. Residues 150-152 (KDQ) are interaction with tRNA. Cysteine 200 (cysteine persulfide intermediate) is an active-site residue. Residues 312–313 (RY) are interaction with tRNA.

The protein belongs to the MnmA/TRMU family.

It localises to the cytoplasm. It catalyses the reaction S-sulfanyl-L-cysteinyl-[protein] + uridine(34) in tRNA + AH2 + ATP = 2-thiouridine(34) in tRNA + L-cysteinyl-[protein] + A + AMP + diphosphate + H(+). Functionally, catalyzes the 2-thiolation of uridine at the wobble position (U34) of tRNA, leading to the formation of s(2)U34. This chain is tRNA-specific 2-thiouridylase MnmA, found in Streptococcus pyogenes serotype M3 (strain SSI-1).